Reading from the N-terminus, the 397-residue chain is Succinate--CoA ligase [ADP-forming] subunit beta (397 aa).

Positions 9-253 constitute an ATP-grasp domain; it reads KEILASYGVR…IREENPIEVE (245 aa). Residues Lys50, 57 to 59, Val106, and Glu116 each bind ATP; that span reads GRG. Mg(2+) is bound by residues Asn208 and Asp222. Substrate-binding positions include Asn273 and 330-332; that span reads GIV.

Belongs to the succinate/malate CoA ligase beta subunit family. In terms of assembly, heterotetramer of two alpha and two beta subunits. Requires Mg(2+) as cofactor.

The catalysed reaction is succinate + ATP + CoA = succinyl-CoA + ADP + phosphate. It catalyses the reaction GTP + succinate + CoA = succinyl-CoA + GDP + phosphate. The protein operates within carbohydrate metabolism; tricarboxylic acid cycle; succinate from succinyl-CoA (ligase route): step 1/1. In terms of biological role, succinyl-CoA synthetase functions in the citric acid cycle (TCA), coupling the hydrolysis of succinyl-CoA to the synthesis of either ATP or GTP and thus represents the only step of substrate-level phosphorylation in the TCA. The beta subunit provides nucleotide specificity of the enzyme and binds the substrate succinate, while the binding sites for coenzyme A and phosphate are found in the alpha subunit. This is Succinate--CoA ligase [ADP-forming] subunit beta from Flavobacterium johnsoniae (strain ATCC 17061 / DSM 2064 / JCM 8514 / BCRC 14874 / CCUG 350202 / NBRC 14942 / NCIMB 11054 / UW101) (Cytophaga johnsonae).